The sequence spans 175 residues: Myosin regulatory light chain 2, atrial isoform (175 aa).

Ala-2 is subject to N-acetylalanine. Phosphoserine occurs at positions 22 and 23. EF-hand domains follow at residues 32 to 67 (AQIQ…LGKV), 102 to 137 (DPEE…QADK), and 138 to 173 (FSPA…GDEK). 4 residues coordinate Ca(2+): Asp-45, Asn-47, Asp-49, and Asp-56.

Myosin is a hexamer of 2 heavy chains and 4 light chains.

This is Myosin regulatory light chain 2, atrial isoform (MYL7) from Sus scrofa (Pig).